We begin with the raw amino-acid sequence, 392 residues long: Formate-dependent phosphoribosylglycinamide formyltransferase (392 aa).

N(1)-(5-phospho-beta-D-ribosyl)glycinamide-binding positions include 22–23 (EL) and Glu-82. Residues Arg-114, Lys-155, 160–165 (SSGKGQ), 195–198 (EGLV), and Glu-203 each bind ATP. Positions 119–308 (RLAAETLSLP…EFALHVRAFL (190 aa)) constitute an ATP-grasp domain. Residues Glu-267 and Glu-279 each coordinate Mg(2+). Residues Asp-286, Lys-355, and 362 to 363 (RR) each bind N(1)-(5-phospho-beta-D-ribosyl)glycinamide.

This sequence belongs to the PurK/PurT family. As to quaternary structure, homodimer.

The catalysed reaction is N(1)-(5-phospho-beta-D-ribosyl)glycinamide + formate + ATP = N(2)-formyl-N(1)-(5-phospho-beta-D-ribosyl)glycinamide + ADP + phosphate + H(+). It functions in the pathway purine metabolism; IMP biosynthesis via de novo pathway; N(2)-formyl-N(1)-(5-phospho-D-ribosyl)glycinamide from N(1)-(5-phospho-D-ribosyl)glycinamide (formate route): step 1/1. Involved in the de novo purine biosynthesis. Catalyzes the transfer of formate to 5-phospho-ribosyl-glycinamide (GAR), producing 5-phospho-ribosyl-N-formylglycinamide (FGAR). Formate is provided by PurU via hydrolysis of 10-formyl-tetrahydrofolate. The sequence is that of Formate-dependent phosphoribosylglycinamide formyltransferase from Sodalis glossinidius (strain morsitans).